We begin with the raw amino-acid sequence, 887 residues long: Alanine--tRNA ligase (887 aa).

H581, H585, C683, and H687 together coordinate Zn(2+).

The protein belongs to the class-II aminoacyl-tRNA synthetase family. Requires Zn(2+) as cofactor.

It is found in the cytoplasm. It carries out the reaction tRNA(Ala) + L-alanine + ATP = L-alanyl-tRNA(Ala) + AMP + diphosphate. Functionally, catalyzes the attachment of alanine to tRNA(Ala) in a two-step reaction: alanine is first activated by ATP to form Ala-AMP and then transferred to the acceptor end of tRNA(Ala). Also edits incorrectly charged Ser-tRNA(Ala) and Gly-tRNA(Ala) via its editing domain. The polypeptide is Alanine--tRNA ligase (Ehrlichia chaffeensis (strain ATCC CRL-10679 / Arkansas)).